The following is a 953-amino-acid chain: Catenin alpha-2 (953 aa).

Thr-632 is subject to Phosphothreonine. Phosphoserine occurs at positions 640, 651, and 901. A compositionally biased stretch (basic and acidic residues) spans Glu-912–Thr-927. Positions Glu-912 to Ser-939 are disordered. Basic residues predominate over residues Arg-928 to Ile-938. Ser-939 is modified (phosphoserine).

This sequence belongs to the vinculin/alpha-catenin family. As to quaternary structure, interacts with CDH1 and CDH2. Interacts with ZNF639; recruits CTNNA2 to the nucleus. Interacts with F-actin. Expressed in neural tissues, with strongest expression in fetal and adult brain. Expressed in the developing cortical plate and marginal zone of 20-week-old human fetal brain.

The protein localises to the cell membrane. It is found in the cytoplasm. The protein resides in the cytoskeleton. Its subcellular location is the cell junction. It localises to the adherens junction. The protein localises to the cell projection. It is found in the axon. The protein resides in the nucleus. Functionally, may function as a linker between cadherin adhesion receptors and the cytoskeleton to regulate cell-cell adhesion and differentiation in the nervous system. Required for proper regulation of cortical neuronal migration and neurite growth. It acts as a negative regulator of Arp2/3 complex activity and Arp2/3-mediated actin polymerization. It thereby suppresses excessive actin branching which would impair neurite growth and stability. Regulates morphological plasticity of synapses and cerebellar and hippocampal lamination during development. Functions in the control of startle modulation. In Homo sapiens (Human), this protein is Catenin alpha-2 (CTNNA2).